We begin with the raw amino-acid sequence, 92 residues long: Large ribosomal subunit protein bL25 (92 aa).

Belongs to the bacterial ribosomal protein bL25 family. As to quaternary structure, part of the 50S ribosomal subunit; part of the 5S rRNA/L5/L18/L25 subcomplex. Contacts the 5S rRNA. Binds to the 5S rRNA independently of L5 and L18.

Its function is as follows. This is one of the proteins that binds to the 5S RNA in the ribosome where it forms part of the central protuberance. This chain is Large ribosomal subunit protein bL25, found in Aliivibrio fischeri (strain MJ11) (Vibrio fischeri).